We begin with the raw amino-acid sequence, 218 residues long: Ribonuclease HII (218 aa).

One can recognise an RNase H type-2 domain in the interval 23-216 (RFLCGVDEAG…VREAIARGLV (194 aa)). The a divalent metal cation site is built by D29, E30, and D125.

This sequence belongs to the RNase HII family. Mn(2+) serves as cofactor. Mg(2+) is required as a cofactor.

The protein localises to the cytoplasm. The enzyme catalyses Endonucleolytic cleavage to 5'-phosphomonoester.. In terms of biological role, endonuclease that specifically degrades the RNA of RNA-DNA hybrids. The protein is Ribonuclease HII of Cupriavidus pinatubonensis (strain JMP 134 / LMG 1197) (Cupriavidus necator (strain JMP 134)).